We begin with the raw amino-acid sequence, 84 residues long: Small ribosomal subunit protein uS17c (84 aa).

The protein belongs to the universal ribosomal protein uS17 family. As to quaternary structure, part of the 30S ribosomal subunit.

It is found in the plastid. The protein localises to the chloroplast. Functionally, one of the primary rRNA binding proteins, it binds specifically to the 5'-end of 16S ribosomal RNA. The chain is Small ribosomal subunit protein uS17c (rps17) from Thalassiosira pseudonana (Marine diatom).